Reading from the N-terminus, the 366-residue chain is MRDVFEMMDRYGHEQVIFCRHPQTGLKAIIALHNTTAGPALGGCRMIPYASTDEALEDVLRLSKGMTYKCSLADVDFGGGKMVIIGDPKKDKSPELFRVIGRFVGGLNGRFYTGTDMGTNPEDFVHAARESKSFAGLPKSYGGKGDTSIPTALGVFHGMRATARFLWGTDQLKGRVVAIQGVGKVGERLLQLLVEVGAYCKIADIDSVRCEQLKEKYGDKVQLVDVNRIHKESCDIFSPCAKGGVVNDDTIDEFRCLAIVGSANNQLVEDRHGALLQKRSICYAPDYLVNAGGLIQVADELEGFHEERVLAKTEAIYDMVLDIFHRAKNENITTCEAADRIVMERLKKLTDIRRILLEDPRNSARR.

R45 contributes to the NAD(+) binding site. K69 is an L-phenylalanine binding site. The active site involves K81. Residues D116, T151, 181–187, 204–205, 241–242, and 262–264 each bind NAD(+); these read GVGKVGE, DI, AK, and SAN. Position 264 (N264) interacts with L-phenylalanine.

It belongs to the Glu/Leu/Phe/Val dehydrogenases family.

The enzyme catalyses L-phenylalanine + NAD(+) + H2O = 3-phenylpyruvate + NH4(+) + NADH + H(+). It functions in the pathway amino-acid biosynthesis; L-phenylalanine biosynthesis; L-phenylalanine from phenylpyruvate (PDH route): step 1/1. Catalyzes the reversible NAD(+)-dependent oxidative deamination of L-phenylalanine to phenylpyruvate. The chain is Phenylalanine dehydrogenase from Thermoactinomyces intermedius.